The chain runs to 482 residues: Aspartyl/glutamyl-tRNA(Asn/Gln) amidotransferase subunit B (482 aa).

This sequence belongs to the GatB/GatE family. GatB subfamily. As to quaternary structure, heterotrimer of A, B and C subunits.

The catalysed reaction is L-glutamyl-tRNA(Gln) + L-glutamine + ATP + H2O = L-glutaminyl-tRNA(Gln) + L-glutamate + ADP + phosphate + H(+). The enzyme catalyses L-aspartyl-tRNA(Asn) + L-glutamine + ATP + H2O = L-asparaginyl-tRNA(Asn) + L-glutamate + ADP + phosphate + 2 H(+). In terms of biological role, allows the formation of correctly charged Asn-tRNA(Asn) or Gln-tRNA(Gln) through the transamidation of misacylated Asp-tRNA(Asn) or Glu-tRNA(Gln) in organisms which lack either or both of asparaginyl-tRNA or glutaminyl-tRNA synthetases. The reaction takes place in the presence of glutamine and ATP through an activated phospho-Asp-tRNA(Asn) or phospho-Glu-tRNA(Gln). The protein is Aspartyl/glutamyl-tRNA(Asn/Gln) amidotransferase subunit B of Methanoregula boonei (strain DSM 21154 / JCM 14090 / 6A8).